The sequence spans 171 residues: Translationally-controlled tumor protein homolog (171 aa).

The TCTP domain occupies 1-171 (MIIYKDIITG…FKDGLEIEKC (171 aa)).

Belongs to the TCTP family.

It is found in the cytoplasm. Its function is as follows. Involved in calcium binding and microtubule stabilization. This Danio rerio (Zebrafish) protein is Translationally-controlled tumor protein homolog (tpt1).